Consider the following 884-residue polypeptide: Alanine--tRNA ligase (884 aa).

The Zn(2+) site is built by His-572, His-576, Cys-673, and His-677.

It belongs to the class-II aminoacyl-tRNA synthetase family. Zn(2+) serves as cofactor.

The protein resides in the cytoplasm. The enzyme catalyses tRNA(Ala) + L-alanine + ATP = L-alanyl-tRNA(Ala) + AMP + diphosphate. Functionally, catalyzes the attachment of alanine to tRNA(Ala) in a two-step reaction: alanine is first activated by ATP to form Ala-AMP and then transferred to the acceptor end of tRNA(Ala). Also edits incorrectly charged Ser-tRNA(Ala) and Gly-tRNA(Ala) via its editing domain. In Xylella fastidiosa (strain M12), this protein is Alanine--tRNA ligase.